We begin with the raw amino-acid sequence, 329 residues long: Replication factor C small subunit 1 (329 aa).

44–51 (GPPGTGKT) contacts ATP.

It belongs to the activator 1 small subunits family. RfcS subfamily. As to quaternary structure, heteromultimer composed of small subunits (RfcS) and large subunits (RfcL).

Its function is as follows. Part of the RFC clamp loader complex which loads the PCNA sliding clamp onto DNA. This Pyrobaculum aerophilum (strain ATCC 51768 / DSM 7523 / JCM 9630 / CIP 104966 / NBRC 100827 / IM2) protein is Replication factor C small subunit 1.